Here is a 302-residue protein sequence, read N- to C-terminus: Aspartate carbamoyltransferase catalytic subunit (302 aa).

The carbamoyl phosphate site is built by arginine 49 and threonine 50. Lysine 77 is an L-aspartate binding site. Carbamoyl phosphate-binding residues include arginine 99, histidine 126, and glutamine 129. Residues arginine 159 and arginine 209 each contribute to the L-aspartate site. Residues alanine 250 and proline 251 each contribute to the carbamoyl phosphate site.

It belongs to the aspartate/ornithine carbamoyltransferase superfamily. ATCase family. As to quaternary structure, heterododecamer (2C3:3R2) of six catalytic PyrB chains organized as two trimers (C3), and six regulatory PyrI chains organized as three dimers (R2).

It catalyses the reaction carbamoyl phosphate + L-aspartate = N-carbamoyl-L-aspartate + phosphate + H(+). It functions in the pathway pyrimidine metabolism; UMP biosynthesis via de novo pathway; (S)-dihydroorotate from bicarbonate: step 2/3. Functionally, catalyzes the condensation of carbamoyl phosphate and aspartate to form carbamoyl aspartate and inorganic phosphate, the committed step in the de novo pyrimidine nucleotide biosynthesis pathway. This chain is Aspartate carbamoyltransferase catalytic subunit, found in Staphylococcus carnosus (strain TM300).